Reading from the N-terminus, the 157-residue chain is Ribonuclease H (157 aa).

In terms of domain architecture, RNase H type-1 spans 3-144 (NSKTVHLYTD…CDELARDAAT (142 aa)). Mg(2+) is bound by residues Asp-12, Glu-50, Asp-72, and Asp-136.

Belongs to the RNase H family. As to quaternary structure, monomer. Mg(2+) is required as a cofactor.

The protein localises to the cytoplasm. It carries out the reaction Endonucleolytic cleavage to 5'-phosphomonoester.. Functionally, endonuclease that specifically degrades the RNA of RNA-DNA hybrids. The chain is Ribonuclease H from Idiomarina loihiensis (strain ATCC BAA-735 / DSM 15497 / L2-TR).